We begin with the raw amino-acid sequence, 249 residues long: Diaminopimelate epimerase (249 aa).

Residues Asn11 and Asn60 each contribute to the substrate site. The active-site Proton donor is the Cys69. Substrate is bound by residues 70-71 (GN), Asn164, and 182-183 (ER). Catalysis depends on Cys192, which acts as the Proton acceptor. 193–194 (GT) contributes to the substrate binding site.

It belongs to the diaminopimelate epimerase family. As to quaternary structure, homodimer.

It is found in the cytoplasm. The enzyme catalyses (2S,6S)-2,6-diaminopimelate = meso-2,6-diaminopimelate. It functions in the pathway amino-acid biosynthesis; L-lysine biosynthesis via DAP pathway; DL-2,6-diaminopimelate from LL-2,6-diaminopimelate: step 1/1. Functionally, catalyzes the stereoinversion of LL-2,6-diaminopimelate (L,L-DAP) to meso-diaminopimelate (meso-DAP), a precursor of L-lysine and an essential component of the bacterial peptidoglycan. The chain is Diaminopimelate epimerase from Campylobacter jejuni (strain RM1221).